The primary structure comprises 486 residues: Aspartyl/glutamyl-tRNA(Asn/Gln) amidotransferase subunit B (486 aa).

Belongs to the GatB/GatE family. GatB subfamily. In terms of assembly, heterotrimer of A, B and C subunits.

It carries out the reaction L-glutamyl-tRNA(Gln) + L-glutamine + ATP + H2O = L-glutaminyl-tRNA(Gln) + L-glutamate + ADP + phosphate + H(+). The enzyme catalyses L-aspartyl-tRNA(Asn) + L-glutamine + ATP + H2O = L-asparaginyl-tRNA(Asn) + L-glutamate + ADP + phosphate + 2 H(+). Its function is as follows. Allows the formation of correctly charged Asn-tRNA(Asn) or Gln-tRNA(Gln) through the transamidation of misacylated Asp-tRNA(Asn) or Glu-tRNA(Gln) in organisms which lack either or both of asparaginyl-tRNA or glutaminyl-tRNA synthetases. The reaction takes place in the presence of glutamine and ATP through an activated phospho-Asp-tRNA(Asn) or phospho-Glu-tRNA(Gln). This is Aspartyl/glutamyl-tRNA(Asn/Gln) amidotransferase subunit B from Orientia tsutsugamushi (strain Boryong) (Rickettsia tsutsugamushi).